The chain runs to 68 residues: DNA-directed RNA polymerase subunit omega (68 aa).

Belongs to the RNA polymerase subunit omega family. As to quaternary structure, the RNAP catalytic core consists of 2 alpha, 1 beta, 1 beta' and 1 omega subunit. When a sigma factor is associated with the core the holoenzyme is formed, which can initiate transcription.

The catalysed reaction is RNA(n) + a ribonucleoside 5'-triphosphate = RNA(n+1) + diphosphate. In terms of biological role, promotes RNA polymerase assembly. Latches the N- and C-terminal regions of the beta' subunit thereby facilitating its interaction with the beta and alpha subunits. The sequence is that of DNA-directed RNA polymerase subunit omega from Geobacter sp. (strain M21).